Reading from the N-terminus, the 308-residue chain is UDP-3-O-acyl-N-acetylglucosamine deacetylase (308 aa).

Zn(2+) is bound by residues His77, His233, and Asp237. His260 functions as the Proton donor in the catalytic mechanism.

The protein belongs to the LpxC family. Requires Zn(2+) as cofactor.

The catalysed reaction is a UDP-3-O-[(3R)-3-hydroxyacyl]-N-acetyl-alpha-D-glucosamine + H2O = a UDP-3-O-[(3R)-3-hydroxyacyl]-alpha-D-glucosamine + acetate. It functions in the pathway glycolipid biosynthesis; lipid IV(A) biosynthesis; lipid IV(A) from (3R)-3-hydroxytetradecanoyl-[acyl-carrier-protein] and UDP-N-acetyl-alpha-D-glucosamine: step 2/6. Its function is as follows. Catalyzes the hydrolysis of UDP-3-O-myristoyl-N-acetylglucosamine to form UDP-3-O-myristoylglucosamine and acetate, the committed step in lipid A biosynthesis. In Nitratidesulfovibrio vulgaris (strain ATCC 29579 / DSM 644 / CCUG 34227 / NCIMB 8303 / VKM B-1760 / Hildenborough) (Desulfovibrio vulgaris), this protein is UDP-3-O-acyl-N-acetylglucosamine deacetylase.